Reading from the N-terminus, the 394-residue chain is Tryptophan synthase beta chain (394 aa).

At K90 the chain carries N6-(pyridoxal phosphate)lysine.

This sequence belongs to the TrpB family. As to quaternary structure, tetramer of two alpha and two beta chains. It depends on pyridoxal 5'-phosphate as a cofactor.

It catalyses the reaction (1S,2R)-1-C-(indol-3-yl)glycerol 3-phosphate + L-serine = D-glyceraldehyde 3-phosphate + L-tryptophan + H2O. It participates in amino-acid biosynthesis; L-tryptophan biosynthesis; L-tryptophan from chorismate: step 5/5. The beta subunit is responsible for the synthesis of L-tryptophan from indole and L-serine. The polypeptide is Tryptophan synthase beta chain (Parabacteroides distasonis (strain ATCC 8503 / DSM 20701 / CIP 104284 / JCM 5825 / NCTC 11152)).